The sequence spans 497 residues: Probable cytosol aminopeptidase (497 aa).

The Mn(2+) site is built by Lys263 and Asp268. Residue Lys275 is part of the active site. Mn(2+) is bound by residues Asp286, Asp345, and Glu347. Residue Arg349 is part of the active site.

The protein belongs to the peptidase M17 family. The cofactor is Mn(2+).

It localises to the cytoplasm. The enzyme catalyses Release of an N-terminal amino acid, Xaa-|-Yaa-, in which Xaa is preferably Leu, but may be other amino acids including Pro although not Arg or Lys, and Yaa may be Pro. Amino acid amides and methyl esters are also readily hydrolyzed, but rates on arylamides are exceedingly low.. The catalysed reaction is Release of an N-terminal amino acid, preferentially leucine, but not glutamic or aspartic acids.. Functionally, presumably involved in the processing and regular turnover of intracellular proteins. Catalyzes the removal of unsubstituted N-terminal amino acids from various peptides. This is Probable cytosol aminopeptidase from Rhizobium meliloti (strain 1021) (Ensifer meliloti).